Here is a 370-residue protein sequence, read N- to C-terminus: TD and POZ domain-containing protein 4 (370 aa).

In terms of domain architecture, MATH spans 19 to 149 (KLCYRWTISN…DDKFTLLCKV (131 aa)). A BTB domain is found at 188-251 (TDCSLLVAGH…MMGFIYTGKV (64 aa)).

This sequence belongs to the Tdpoz family.

The polypeptide is TD and POZ domain-containing protein 4 (Mus musculus (Mouse)).